Here is an 804-residue protein sequence, read N- to C-terminus: Phenylalanine--tRNA ligase beta subunit (804 aa).

Positions 38-148 (RSYLKGFVIA…EDVPIGASFA (111 aa)) constitute a tRNA-binding domain. A B5 domain is found at 401–476 (PEIRQITFPL…RIYGLDKIKP (76 aa)). Mg(2+) is bound by residues Asp-454, Asp-460, Glu-463, and Glu-464. Residues 710–803 (SSLQMVRRDF…VTRMTGASLR (94 aa)) enclose the FDX-ACB domain.

This sequence belongs to the phenylalanyl-tRNA synthetase beta subunit family. Type 1 subfamily. Tetramer of two alpha and two beta subunits. Requires Mg(2+) as cofactor.

The protein localises to the cytoplasm. The catalysed reaction is tRNA(Phe) + L-phenylalanine + ATP = L-phenylalanyl-tRNA(Phe) + AMP + diphosphate + H(+). The sequence is that of Phenylalanine--tRNA ligase beta subunit from Bartonella henselae (strain ATCC 49882 / DSM 28221 / CCUG 30454 / Houston 1) (Rochalimaea henselae).